Here is a 231-residue protein sequence, read N- to C-terminus: Uracil-DNA glycosylase (231 aa).

Residue Asp-74 is the Proton acceptor of the active site.

It belongs to the uracil-DNA glycosylase (UDG) superfamily. UNG family.

It is found in the cytoplasm. It catalyses the reaction Hydrolyzes single-stranded DNA or mismatched double-stranded DNA and polynucleotides, releasing free uracil.. Excises uracil residues from the DNA which can arise as a result of misincorporation of dUMP residues by DNA polymerase or due to deamination of cytosine. In Campylobacter jejuni subsp. jejuni serotype O:23/36 (strain 81-176), this protein is Uracil-DNA glycosylase.